The following is a 421-amino-acid chain: UDP-N-acetylglucosamine 1-carboxyvinyltransferase 1 (421 aa).

22-23 (KN) lines the phosphoenolpyruvate pocket. A UDP-N-acetyl-alpha-D-glucosamine-binding site is contributed by Arg95. The active-site Proton donor is Cys119. Residue Cys119 is modified to 2-(S-cysteinyl)pyruvic acid O-phosphothioketal. UDP-N-acetyl-alpha-D-glucosamine is bound by residues 124–128 (RPIEQ), Asp308, and Val330.

It belongs to the EPSP synthase family. MurA subfamily.

It localises to the cytoplasm. The catalysed reaction is phosphoenolpyruvate + UDP-N-acetyl-alpha-D-glucosamine = UDP-N-acetyl-3-O-(1-carboxyvinyl)-alpha-D-glucosamine + phosphate. The protein operates within cell wall biogenesis; peptidoglycan biosynthesis. Functionally, cell wall formation. Adds enolpyruvyl to UDP-N-acetylglucosamine. The protein is UDP-N-acetylglucosamine 1-carboxyvinyltransferase 1 of Staphylococcus aureus (strain bovine RF122 / ET3-1).